A 122-amino-acid polypeptide reads, in one-letter code: Large ribosomal subunit protein eL8 (122 aa).

The protein belongs to the eukaryotic ribosomal protein eL8 family. In terms of assembly, part of the 50S ribosomal subunit. Probably part of the RNase P complex.

The protein resides in the cytoplasm. Multifunctional RNA-binding protein that recognizes the K-turn motif in ribosomal RNA, the RNA component of RNase P, box H/ACA, box C/D and box C'/D' sRNAs. The protein is Large ribosomal subunit protein eL8 of Methanothrix thermoacetophila (strain DSM 6194 / JCM 14653 / NBRC 101360 / PT) (Methanosaeta thermophila).